The chain runs to 37 residues: Large ribosomal subunit protein bL36 (37 aa).

Belongs to the bacterial ribosomal protein bL36 family.

This chain is Large ribosomal subunit protein bL36, found in Vibrio atlanticus (strain LGP32) (Vibrio splendidus (strain Mel32)).